Consider the following 329-residue polypeptide: Phenylalanine--tRNA ligase alpha subunit (329 aa).

This sequence belongs to the class-II aminoacyl-tRNA synthetase family. Phe-tRNA synthetase alpha subunit type 1 subfamily. Tetramer of two alpha and two beta subunits. Mg(2+) is required as a cofactor.

The protein localises to the cytoplasm. It catalyses the reaction tRNA(Phe) + L-phenylalanine + ATP = L-phenylalanyl-tRNA(Phe) + AMP + diphosphate + H(+). The chain is Phenylalanine--tRNA ligase alpha subunit (pheS) from Buchnera aphidicola subsp. Acyrthosiphon pisum (strain APS) (Acyrthosiphon pisum symbiotic bacterium).